The sequence spans 370 residues: MSIDFQIDKPKSAQRIVVAMSGGVDSSVVAALAKATGAETIGITLQLYDHGAAVGRKGSCCAGKDIRDARAVAEKIGIPHYVFDYENNFKESVIDDFVSEYVAGRTPVPCIRCNQGVKFTDLLNVARELGADCLATGHYVRRLVNNDRVEMHRALDPARDQSYFLFATTKEQLDYLRFPLGGLPKPKVREMAAELGLSVAMKADSQDICFVPDGDYARIVEEKCPESGQGGDIVDMQGRVLGKHSGLIHFTVGQRRGLEIGGQKEPLYVIRLDPAKKQLVVGPRQALAVAKAEIKEVNWLVDGFDREMQVKIRSAAKPVSARFDGKELVFEKPEYGVSPGQAAVFYDGDQVLGGGWIKETTPAVFDDLAE.

ATP-binding positions include 19–26 (AMSGGVDS) and Leu45. The active-site Nucleophile is the Cys113. An intrachain disulfide couples Cys113 to Cys209. Gly137 contributes to the ATP binding site. The interval 159-161 (RDQ) is interaction with tRNA. The active-site Cysteine persulfide intermediate is Cys209.

This sequence belongs to the MnmA/TRMU family.

The protein resides in the cytoplasm. The catalysed reaction is S-sulfanyl-L-cysteinyl-[protein] + uridine(34) in tRNA + AH2 + ATP = 2-thiouridine(34) in tRNA + L-cysteinyl-[protein] + A + AMP + diphosphate + H(+). Functionally, catalyzes the 2-thiolation of uridine at the wobble position (U34) of tRNA, leading to the formation of s(2)U34. This is tRNA-specific 2-thiouridylase MnmA from Zymomonas mobilis subsp. mobilis (strain ATCC 31821 / ZM4 / CP4).